Here is a 454-residue protein sequence, read N- to C-terminus: MKKLFGTDGVRGVANVYPMTTEMAMQIGRAAAHIFRNGKSRHRIVIGKDTRLSGYMIENALVAGICSMGVDVLQVGPLPTPGIANITSSMRADAGVVISASHNPFQDNGIKFFCRDGFKLPDEMELRIEELIFSGDMDSMRPIANEVGKAYRIDDAAGRFVVFLKSTFPKDMDLSGLKIVLDCANGAAYKVAPAVFEELGAEVIAIGVKPNGTNINAGCGSLHPEVISAAVKEHGADLGIALDGDADRVIFVDEFGNEVNGDNIMAICATDMLQKGTLNKQTLVATVMSNMGLDIAVKRAGGRVIKTAVGDRYVVEEMQKGGYNLGGEQSGHMIFLDHNTTGDGILSALQVLAVMQRQGKRLSELAEVMFALPQVLVNVRVAEKRDVMTIPAVAGLIGDIEAKVKDEGRILIRYSGTEPLLRIMLEGQDKYQISGWAKEIADLVEKNIGGSKVG.

The active-site Phosphoserine intermediate is the Ser101. Mg(2+) contacts are provided by Ser101, Asp243, Asp245, and Asp247. Position 101 is a phosphoserine (Ser101).

Belongs to the phosphohexose mutase family. Requires Mg(2+) as cofactor. Activated by phosphorylation.

The catalysed reaction is alpha-D-glucosamine 1-phosphate = D-glucosamine 6-phosphate. Functionally, catalyzes the conversion of glucosamine-6-phosphate to glucosamine-1-phosphate. The polypeptide is Phosphoglucosamine mutase (Geotalea daltonii (strain DSM 22248 / JCM 15807 / FRC-32) (Geobacter daltonii)).